The following is an 833-amino-acid chain: ERAD-associated E3 ubiquitin-protein ligase component HRD3 (833 aa).

Residues 1–20 form the signal peptide; the sequence is MITLLLYLCVICNAIVLIRA. Residues asparagine 101, asparagine 123, and asparagine 142 are each glycosylated (N-linked (GlcNAc...) asparagine). The Sel1-like 1 repeat unit spans residues 103–139; it reads SEATYTLSQIHLWSQYNFPHNMTLAHKYLEKFNDLTH. 6 Sel1-like repeats span residues 143-186, 187-222, 413-445, 552-595, 596-627, and 628-663; these read HSAI…QLGN, LKAK…EQLR, GRAC…KTQA, ETAQ…KQGN, IDAG…LKYS, and IQAI…EHDH. Asparagine 429 carries N-linked (GlcNAc...) asparagine glycosylation. The N-linked (GlcNAc...) asparagine glycan is linked to asparagine 611. Residues 768-788 traverse the membrane as a helical segment; that stretch reads LVTMGCILGIFLLSILMSTLA. Positions 805–824 are disordered; that stretch reads NGNRQQEQQQQQQAQGPPGW. Low complexity predominate over residues 809–819; that stretch reads QQEQQQQQQAQ.

Belongs to the sel-1 family. As to quaternary structure, component of the HRD1 ubiquitin ligase complex which contains the E3 ligase HRD1, its cofactors HRD3, USA1 and DER1, substrate recruiting factor YOS9 and CDC48-binding protein UBX2. Within the complex, interacts directly with HRD1 and YOS9 (via N-terminus). In ERAD-L, HRD3 and YOS9 jointly bind misfolded glycoproteins in the endoplasmic reticulum (ER) lumen. Movement of ERAD-L substrates through the ER membrane is facilitated by HRD1 and DER1 which have lateral gates facing each other and which distort the membrane region between the lateral gates, making it much thinner than a normal phospholipid bilayer. Substrates insert into the membrane as a hairpin loop with one strand interacting with DER1 and the other with HRD1. The HRD1 complex interacts with the heterotrimeric CDC48-NPL4-UFD1 ATPase complex which is recruited by UBX2 via its interaction with CDC48 and which moves ubiquitinated substrates to the cytosol for targeting to the proteasome. The HRD1 complex interacts with the ERAD substrates HMG1 and HMG2. Interacts with KAR2.

The protein localises to the endoplasmic reticulum membrane. Its function is as follows. Component of the endoplasmic reticulum quality control (ERQC) system involved in ubiquitin-dependent degradation of misfolded endoplasmic reticulum proteins. Component of the HRD1 ubiquitin ligase complex, which is part of the ERAD-L and ERAD-M pathways responsible for the rapid degradation of soluble lumenal and membrane proteins with misfolded lumenal domains (ERAD-L), or ER-membrane proteins with misfolded transmembrane domains (ERAD-M). ERAD-L substrates are ubiquitinated through HRD1 in conjunction with the E2 ubiquitin-conjugating enzymes UBC1 and UBC7-CUE1. Ubiquitinated substrates are then removed to the cytosol via the action of the CDC48-NPL4-UFD1 ATPase complex and targeted to the proteasome. ERAD-M substrates are processed by the same HRD1-HRD3 core complex, but only a subset of the other components is required for ERAD-M. Stabilizes the HRD1 ubiquitin-protein ligase. Also functions in recruiting misfolded protein substrates in conjunction with YOS9. The sequence is that of ERAD-associated E3 ubiquitin-protein ligase component HRD3 (HRD3) from Saccharomyces cerevisiae (strain ATCC 204508 / S288c) (Baker's yeast).